The primary structure comprises 279 residues: Four and a half LIM domains protein 2 (279 aa).

The segment at Cys-7–Cys-31 adopts a C4-type zinc-finger fold. 3 LIM zinc-binding domains span residues Cys-40 to Cys-92, Cys-101 to Cys-153, and Cys-162 to Cys-212. Lys-78 participates in a covalent cross-link: Glycyl lysine isopeptide (Lys-Gly) (interchain with G-Cter in SUMO2). Residues Lys-167 and Lys-220 each participate in a glycyl lysine isopeptide (Lys-Gly) (interchain with G-Cter in SUMO2) cross-link. One can recognise an LIM zinc-binding 4 domain in the interval Cys-221–Cys-275. Residue Ser-238 is modified to Phosphoserine.

As to quaternary structure, interacts with ZNF638 and TTN/titin. Interacts with E4F1. Interacts with GRB7. Interacts with SIRT1 and FOXO1. Interacts with CEFIP and calcineurin. Interacts with FOXK1.

The protein localises to the cytoplasm. The protein resides in the nucleus. It localises to the myofibril. It is found in the sarcomere. Its subcellular location is the z line. Functionally, may function as a molecular transmitter linking various signaling pathways to transcriptional regulation. Negatively regulates the transcriptional repressor E4F1 and may function in cell growth. Inhibits the transcriptional activity of FOXO1 and its apoptotic function by enhancing the interaction of FOXO1 with SIRT1 and FOXO1 deacetylation. Negatively regulates the calcineurin/NFAT signaling pathway in cardiomyocytes. The polypeptide is Four and a half LIM domains protein 2 (FHL2) (Bos taurus (Bovine)).